The sequence spans 514 residues: GMP synthase [glutamine-hydrolyzing] (514 aa).

In terms of domain architecture, Glutamine amidotransferase type-1 spans 9–199 (MILVLDFGGQ…LFEVCQCTGD (191 aa)). Residue Cys-86 is the Nucleophile of the active site. Residues His-173 and Glu-175 contribute to the active site. One can recognise a GMPS ATP-PPase domain in the interval 200–389 (WSMENFIEIE…LGLSDEIVWR (190 aa)). 227-233 (SGGVDSS) contributes to the ATP binding site.

Homodimer.

It carries out the reaction XMP + L-glutamine + ATP + H2O = GMP + L-glutamate + AMP + diphosphate + 2 H(+). The protein operates within purine metabolism; GMP biosynthesis; GMP from XMP (L-Gln route): step 1/1. Functionally, catalyzes the synthesis of GMP from XMP. The protein is GMP synthase [glutamine-hydrolyzing] of Exiguobacterium sibiricum (strain DSM 17290 / CCUG 55495 / CIP 109462 / JCM 13490 / 255-15).